Reading from the N-terminus, the 1371-residue chain is Serine protease pic autotransporter (1371 aa).

The first 55 residues, 1-55 (MNKVYSLKYCPVTGGLIVVSELASRVIKKTCRRLTHILLAGIPAVYLYYPQISQA), serve as a signal peptide directing secretion. In terms of domain architecture, Peptidase S6 spans 56 to 301 (GIVRSDIAYQ…NVIPTDYLNQ (246 aa)). Residues His-127, Asp-155, and Ser-258 each act as charge relay system in the active site. One can recognise an Autotransporter domain in the interval 1105-1371 (DTNGDAGAWA…AVNANFRYMF (267 aa)).

In terms of processing, cleaved to release the mature protein from the outer membrane.

It localises to the periplasm. The protein resides in the secreted. Its subcellular location is the cell surface. It is found in the cell outer membrane. Functionally, involved in virulence of uropathogenic E.coli although it is not known how it contributes to it. Has no mucinase activity. This is Serine protease pic autotransporter (pic) from Escherichia coli O6:H1 (strain CFT073 / ATCC 700928 / UPEC).